The following is a 238-amino-acid chain: RxLR effector protein PITG_14788 (238 aa).

Residues 1 to 23 (MKSLHAVNLVLLLLLACFAPAPA) form the signal peptide. Residues 47-65 (RLLRAHSSGKEEQKEEEER) carry the RxLR-dEER motif.

This sequence belongs to the RxLR effector family.

It is found in the secreted. The protein resides in the host cytoplasm. It localises to the host cytoskeleton. Its subcellular location is the host nucleus. The protein localises to the host nucleolus. Effector that enhances P.infestans colonization of Nicotiana benthamiana leaves. The polypeptide is RxLR effector protein PITG_14788 (Phytophthora infestans (strain T30-4) (Potato late blight agent)).